The chain runs to 578 residues: Ketol-acid reductoisomerase, chloroplastic (578 aa).

A chloroplast-targeting transit peptide spans 1–52; that stretch reads MAASTTLALSHPKTLAAAAAAAPKAPTAPAAVSFPVSHAACAPLAARRRAVT. The region spanning 90-288 is the KARI N-terminal Rossmann domain; that stretch reads VRGGRNLFPL…ALGSPFTFAT (199 aa). Residues 111-118, 144-149, and 183-187 contribute to the NADP(+) site; these read GVIGWGSQ, RKGSKS, and SDAAQ. His-208 is an active-site residue. KARI C-terminal knotted domains lie at 289-437 and 438-574; these read TLEQ…RPEN and DLGP…RPEL. Positions 297, 301, 474, and 478 each coordinate Mg(2+). Ser-500 is a binding site for substrate.

It belongs to the ketol-acid reductoisomerase family. In terms of assembly, homodimer. The cofactor is Mg(2+).

The protein resides in the plastid. It is found in the chloroplast. It carries out the reaction (2R)-2,3-dihydroxy-3-methylbutanoate + NADP(+) = (2S)-2-acetolactate + NADPH + H(+). It catalyses the reaction (2R,3R)-2,3-dihydroxy-3-methylpentanoate + NADP(+) = (S)-2-ethyl-2-hydroxy-3-oxobutanoate + NADPH + H(+). Its pathway is amino-acid biosynthesis; L-isoleucine biosynthesis; L-isoleucine from 2-oxobutanoate: step 2/4. The protein operates within amino-acid biosynthesis; L-valine biosynthesis; L-valine from pyruvate: step 2/4. This chain is Ketol-acid reductoisomerase, chloroplastic, found in Oryza sativa subsp. japonica (Rice).